The primary structure comprises 98 residues: NADH-ubiquinone oxidoreductase chain 4L (98 aa).

Transmembrane regions (helical) follow at residues 1–21, 29–49, and 61–81; these read MSIT…GLLM, SLLC…MAIL, and IILL…LVMV.

The protein belongs to the complex I subunit 4L family. As to quaternary structure, core subunit of respiratory chain NADH dehydrogenase (Complex I) which is composed of 45 different subunits.

It localises to the mitochondrion inner membrane. The catalysed reaction is a ubiquinone + NADH + 5 H(+)(in) = a ubiquinol + NAD(+) + 4 H(+)(out). Its function is as follows. Core subunit of the mitochondrial membrane respiratory chain NADH dehydrogenase (Complex I) which catalyzes electron transfer from NADH through the respiratory chain, using ubiquinone as an electron acceptor. Part of the enzyme membrane arm which is embedded in the lipid bilayer and involved in proton translocation. The polypeptide is NADH-ubiquinone oxidoreductase chain 4L (MT-ND4L) (Mesophylla macconnelli (MacConnell's bat)).